A 118-amino-acid chain; its full sequence is MGNRAFKAHNGHYLSAEHDHVKTHHGHHDHHTHFHIENHGSKVALRTHCGKYVSIGDHKQVYLSHHLHGDHSLFHLEHHHGKVSIKGHHHHYISVDGHGHVSTSHHHDHHATFEEHIL.

A lipid anchor (N-myristoyl glycine) is attached at glycine 2. Positions alanine 8 to histidine 109 are contains several HHXH repeats. 2 tandem repeats follow at residues phenylalanine 34–arginine 46 and phenylalanine 74–lysine 86. Positions phenylalanine 34–lysine 86 are 2 X 13 AA approximate repeats. Residues glycine 99–leucine 118 form a disordered region.

The protein belongs to the hisactophilin family. Homodimer or heterodimer of hatA and hatB, linked by a disulfide bond. Post-translationally, phosphorylated.

It localises to the cytoplasm. The protein resides in the cell membrane. In terms of biological role, may act as an intracellular pH sensor that links chemotactic signals to responses in the microfilament system of the cells by nucleating actin polymerization or stabilizing the filaments. This Dictyostelium discoideum (Social amoeba) protein is Hisactophilin-2 (hatB).